The chain runs to 425 residues: Adenosylhomocysteinase (425 aa).

Substrate contacts are provided by Thr60, Asp132, and Glu157. Thr158 to Thr160 provides a ligand contact to NAD(+). Residues Lys187 and Asp191 each contribute to the substrate site. Residues Asn192, Gly221 to Gly226, Glu244, Asn279, Ser300 to His302, and Asn347 each bind NAD(+).

The protein belongs to the adenosylhomocysteinase family. Requires NAD(+) as cofactor.

The protein resides in the cytoplasm. The catalysed reaction is S-adenosyl-L-homocysteine + H2O = L-homocysteine + adenosine. Its pathway is amino-acid biosynthesis; L-homocysteine biosynthesis; L-homocysteine from S-adenosyl-L-homocysteine: step 1/1. Its function is as follows. May play a key role in the regulation of the intracellular concentration of adenosylhomocysteine. This Synechocystis sp. (strain ATCC 27184 / PCC 6803 / Kazusa) protein is Adenosylhomocysteinase.